Consider the following 448-residue polypeptide: Leukocyte immunoglobulin-like receptor subfamily B member 4 (448 aa).

A signal peptide spans 1–21; sequence MIPTFTALLCLGLSLGPRTHM. The Extracellular segment spans residues 22–259; sequence QAGPLPKPTL…PHSGLRRHWE (238 aa). 2 Ig-like C2-type domains span residues 27 to 118 and 124 to 218; these read PKPT…LVMT and PTLS…LIVS. 2 cysteine pairs are disulfide-bonded: cysteine 49–cysteine 98 and cysteine 144–cysteine 195. The disordered stretch occupies residues 217–248; it reads VSGSLEDPRPSPTRSVSTAAGPEDQPLMPTGS. A helical membrane pass occupies residues 260-280; the sequence is VLIGVLVVSILLLSLLLFLLL. The Cytoplasmic portion of the chain corresponds to 281–448; the sequence is QHWRQGKHRT…PSVYATLAIH (168 aa). The interval 297 to 448 is disordered; the sequence is DFQRPPGAAE…PSVYATLAIH (152 aa). Position 319 is a phosphoserine (serine 319). The segment covering 344-354 has biased composition (basic and acidic residues); it reads MDTRQSPHDED. Residues 358–363 carry the ITIM motif 1 motif; that stretch reads VTYAKV. The span at 384–398 shows a compositional bias: basic and acidic residues; sequence LDTKDRQAEEDRQMD. 2 short sequence motifs (ITIM motif) span residues 410-415 and 440-445; these read VTYAQL and SVYATL.

In terms of assembly, interacts with PTPN6. As to expression, detected on monocytes, macrophages, dendritic cells, natural killer cells and B-cells (at protein level). Expressed in the lung.

It is found in the cell membrane. In terms of biological role, inhibitory receptor involved in the down-regulation of the immune response and the development of immune tolerance. Receptor for FN1. Receptor for apolipoprotein APOE. Receptor for ALCAM/CD166. Inhibits receptor-mediated phosphorylation of cellular proteins and mobilization of intracellular calcium ions. Inhibits FCGR1A/CD64-mediated monocyte activation by inducing phosphatase-mediated down-regulation of the phosphorylation of multiple proteins including LCK, SYK, LAT and ERK, leading to a reduction in TNF production. This inhibition of monocyte activation occurs at least in part via binding to FN1. Inhibits T cell proliferation, inducing anergy, suppressing the differentiation of IFNG-producing CD8+ cytotoxic T cells and enhancing the generation of CD8+ T suppressor cells. Induces up-regulation of CD86 on dendritic cells. Interferes with TNFRSF5-signaling and NF-kappa-B up-regulation. In Homo sapiens (Human), this protein is Leukocyte immunoglobulin-like receptor subfamily B member 4 (LILRB4).